The primary structure comprises 253 residues: MALQSESPGPVSPSVDPAEIAKFSKLSAQWWDPTGKMAPLHRINPLRISFIRDAACRKFERNAKSLSCLSGLRMLDIGCGAGLLCEPFTRLGAQVIGIDPSATNIAAAKIHADKSHLPIDYRCTTVEEIDPRERFDIVLAMEVIEHVTDVGAFLGRCAALMKPNGIMVVATLNRNWKSFALAIVGAEYVMRWLPRGTHQWDKFVTPAELEQHLHGFGMIVTEQSGLVFNPLADRWKLSADMDVNYMVVAETAP.

S-adenosyl-L-methionine-binding residues include Arg47, Gly78, Asp99, and Met141.

This sequence belongs to the methyltransferase superfamily. UbiG/COQ3 family.

The catalysed reaction is a 3-demethylubiquinol + S-adenosyl-L-methionine = a ubiquinol + S-adenosyl-L-homocysteine + H(+). It catalyses the reaction a 3-(all-trans-polyprenyl)benzene-1,2-diol + S-adenosyl-L-methionine = a 2-methoxy-6-(all-trans-polyprenyl)phenol + S-adenosyl-L-homocysteine + H(+). Its pathway is cofactor biosynthesis; ubiquinone biosynthesis. Functionally, O-methyltransferase that catalyzes the 2 O-methylation steps in the ubiquinone biosynthetic pathway. The polypeptide is Ubiquinone biosynthesis O-methyltransferase (Rhodopseudomonas palustris (strain HaA2)).